We begin with the raw amino-acid sequence, 187 residues long: Ribonuclease M5 (187 aa).

The Toprim domain occupies 5–88 (KEVIVVEGKD…AFLPRKAGVP (84 aa)). Mg(2+) contacts are provided by Glu-11, Asp-57, and Asp-59.

It belongs to the ribonuclease M5 family. It depends on Mg(2+) as a cofactor.

It localises to the cytoplasm. It carries out the reaction Endonucleolytic cleavage of RNA, removing 21 and 42 nucleotides, respectively, from the 5'- and 3'-termini of a 5S-rRNA precursor.. Functionally, required for correct processing of both the 5' and 3' ends of 5S rRNA precursor. Cleaves both sides of a double-stranded region yielding mature 5S rRNA in one step. The protein is Ribonuclease M5 of Lactiplantibacillus plantarum (strain ATCC BAA-793 / NCIMB 8826 / WCFS1) (Lactobacillus plantarum).